The chain runs to 423 residues: FAD-dependent monooxygenase asL6 (423 aa).

Residues 10-13 (AGVA), 34-35 (ER), Arg108, Tyr290, and Asp312 each bind FAD. The chain crosses the membrane as a helical span at residues 371–391 (GMGMFQSKFGVGVFYVLLAII).

This sequence belongs to the aromatic-ring hydroxylase family. The cofactor is FAD.

Its subcellular location is the membrane. Its pathway is secondary metabolite biosynthesis; terpenoid biosynthesis. FAD-dependent monooxygenase; part of the gene cluster that mediates the biosynthesis of xenovulene A, an unusual meroterpenoid that has potent inhibitory effects on the human gamma-aminobutyrate A (GABAA) benzodiazepine receptor. The first step of xenovulene A biosynthesis is the biosynthesis of 3-methylorcinaldehyde performed by the non-reducing polyketide synthase aspks1. The salicylate hydroxylase asL1 then catalyzes the oxidative dearomatization of 3-methylorcinaldehyde to yield a dearomatized hydroxycyclohexadione. The 2-oxoglutarate-dependent dioxygenase asL3 further catalyzes the oxidative ring expansion to provide the first tropolone metabolite. The cytochrome P450 monooxygenase asR2 allows the synthesis of tropolone hemiacetal. In parallel, a previously unrecognised class of terpene cyclase, asR6, produces alpha-humulene from farnesylpyrophosphate (FPP). The putative Diels-Alderase asR5 probably catalyzes the formation of the tropolone-humulene skeleton by linking humulene and the polyketide moiety. Oxidative-ring contractions catalyzed by asL4 and asL6 then processively remove carbon atoms from the polyketide to yield xenovulene A. The sequence is that of FAD-dependent monooxygenase asL6 from Sarocladium schorii (Acremonium strictum (strain IMI 501407)).